The chain runs to 371 residues: Carbamoyl phosphate synthase small chain (371 aa).

The segment at 1 to 186 (MDYYNNDTPG…IHQGKTGDVV (186 aa)) is CPSase. Residues S52, G233, and G235 each coordinate L-glutamine. Positions 185–371 (VVVVVDCGIK…KFKKMVVGDA (187 aa)) constitute a Glutamine amidotransferase type-1 domain. Residue C261 is the Nucleophile of the active site. Positions 262, 265, 303, 305, and 306 each coordinate L-glutamine. Residues H346 and E348 contribute to the active site.

The protein belongs to the CarA family. As to quaternary structure, composed of two chains; the small (or glutamine) chain promotes the hydrolysis of glutamine to ammonia, which is used by the large (or ammonia) chain to synthesize carbamoyl phosphate. Tetramer of heterodimers (alpha,beta)4.

It catalyses the reaction hydrogencarbonate + L-glutamine + 2 ATP + H2O = carbamoyl phosphate + L-glutamate + 2 ADP + phosphate + 2 H(+). The enzyme catalyses L-glutamine + H2O = L-glutamate + NH4(+). It participates in amino-acid biosynthesis; L-arginine biosynthesis; carbamoyl phosphate from bicarbonate: step 1/1. It functions in the pathway pyrimidine metabolism; UMP biosynthesis via de novo pathway; (S)-dihydroorotate from bicarbonate: step 1/3. Functionally, small subunit of the glutamine-dependent carbamoyl phosphate synthetase (CPSase). CPSase catalyzes the formation of carbamoyl phosphate from the ammonia moiety of glutamine, carbonate, and phosphate donated by ATP, constituting the first step of 2 biosynthetic pathways, one leading to arginine and/or urea and the other to pyrimidine nucleotides. The small subunit (glutamine amidotransferase) binds and cleaves glutamine to supply the large subunit with the substrate ammonia. In Sulfolobus acidocaldarius (strain ATCC 33909 / DSM 639 / JCM 8929 / NBRC 15157 / NCIMB 11770), this protein is Carbamoyl phosphate synthase small chain.